A 130-amino-acid chain; its full sequence is Small ribosomal subunit protein uS8 (130 aa).

Lys-88 is modified (N6-succinyllysine).

The protein belongs to the universal ribosomal protein uS8 family. As to quaternary structure, component of the small ribosomal subunit. Part of the small subunit (SSU) processome, composed of more than 70 proteins and the RNA chaperone small nucleolar RNA (snoRNA) U3.

It is found in the cytoplasm. The protein localises to the nucleus. It localises to the nucleolus. Component of the small ribosomal subunit. The ribosome is a large ribonucleoprotein complex responsible for the synthesis of proteins in the cell. Part of the small subunit (SSU) processome, first precursor of the small eukaryotic ribosomal subunit. During the assembly of the SSU processome in the nucleolus, many ribosome biogenesis factors, an RNA chaperone and ribosomal proteins associate with the nascent pre-rRNA and work in concert to generate RNA folding, modifications, rearrangements and cleavage as well as targeted degradation of pre-ribosomal RNA by the RNA exosome. Required for proper erythropoiesis. The polypeptide is Small ribosomal subunit protein uS8 (Rps15a) (Mus musculus (Mouse)).